Here is a 237-residue protein sequence, read N- to C-terminus: Lycopene beta-cyclase (237 aa).

Transmembrane regions (helical) follow at residues 3–23 (TSYL…LGVV), 38–58 (VGIL…YLIA), 80–100 (EYLF…ALPL), 113–133 (AVLG…LLTV), 137–157 (FYIG…WAVG), 170–192 (AAVL…DGIW), and 213–233 (AFFF…AWVL).

This sequence belongs to the lycopene beta-cyclase family.

Its subcellular location is the cell membrane. The catalysed reaction is a carotenoid psi-end group = a carotenoid beta-end derivative. The enzyme catalyses all-trans-lycopene = gamma-carotene. It carries out the reaction gamma-carotene = all-trans-beta-carotene. It participates in carotenoid biosynthesis; beta-carotene biosynthesis. Catalyzes the cyclization of both ends of lycopene to form beta-carotene, a retinal precursor. Is required for bacteriorhodopsin biogenesis, a light-driven proton pump with a covalently bound retinal cofactor. The sequence is that of Lycopene beta-cyclase from Halobacterium salinarum (strain ATCC 29341 / DSM 671 / R1).